Reading from the N-terminus, the 226-residue chain is Large ribosomal subunit protein uL1 (226 aa).

Belongs to the universal ribosomal protein uL1 family. Part of the 50S ribosomal subunit.

Functionally, binds directly to 23S rRNA. The L1 stalk is quite mobile in the ribosome, and is involved in E site tRNA release. Its function is as follows. Protein L1 is also a translational repressor protein, it controls the translation of the L11 operon by binding to its mRNA. In Selenomonas ruminantium, this protein is Large ribosomal subunit protein uL1.